Reading from the N-terminus, the 101-residue chain is MTTNNLVLAGTITRSRRFDSPAGIAHTVLMLEHKSQRYEAEMLRNVYCQIQVVLSGERFNSVTENLKAGVEIQVEGFLNLQQSRNGQNRLVLHAENVELKT.

The SSB domain occupies Met1–Thr101.

This sequence belongs to the PriB family. As to quaternary structure, homodimer. Interacts with PriA and DnaT. Component of the replication restart primosome. Primosome assembly occurs via a 'hand-off' mechanism. PriA binds to replication forks, subsequently PriB then DnaT bind; DnaT then displaces ssDNA to generate the helicase loading substrate.

Its function is as follows. Involved in the restart of stalled replication forks, which reloads the replicative helicase on sites other than the origin of replication; the PriA-PriB pathway is the major replication restart pathway. During primosome assembly it facilitates complex formation between PriA and DnaT on DNA; stabilizes PriA on DNA. Stimulates the DNA unwinding activity of PriA helicase. The sequence is that of Replication restart protein PriB from Shewanella piezotolerans (strain WP3 / JCM 13877).